The following is a 102-amino-acid chain: Flagellar hook-basal body complex protein FliE 1 (102 aa).

It belongs to the FliE family.

The protein resides in the bacterial flagellum basal body. The sequence is that of Flagellar hook-basal body complex protein FliE 1 (fliE1) from Bradyrhizobium diazoefficiens (strain JCM 10833 / BCRC 13528 / IAM 13628 / NBRC 14792 / USDA 110).